The sequence spans 514 residues: uncharacterized protein (514 aa).

The span at 1–15 shows a compositional bias: low complexity; sequence MSSPRGASSMSSRSP. Positions 1–22 are disordered; sequence MSSPRGASSMSSRSPVNLEPES.

This is an uncharacterized protein from Ictaluridae (bullhead catfishes).